Here is a 286-residue protein sequence, read N- to C-terminus: Pantothenate synthetase (286 aa).

30-37 (MGNLHAGH) is an ATP binding site. The Proton donor role is filled by His-37. (R)-pantoate is bound at residue Gln-61. Position 61 (Gln-61) interacts with beta-alanine. 149–152 (GQKD) serves as a coordination point for ATP. (R)-pantoate is bound at residue Gln-155. Residues Val-178 and 186–189 (LSSR) each bind ATP.

It belongs to the pantothenate synthetase family. Homodimer.

It localises to the cytoplasm. The catalysed reaction is (R)-pantoate + beta-alanine + ATP = (R)-pantothenate + AMP + diphosphate + H(+). It functions in the pathway cofactor biosynthesis; (R)-pantothenate biosynthesis; (R)-pantothenate from (R)-pantoate and beta-alanine: step 1/1. Functionally, catalyzes the condensation of pantoate with beta-alanine in an ATP-dependent reaction via a pantoyl-adenylate intermediate. This is Pantothenate synthetase from Stutzerimonas stutzeri (strain A1501) (Pseudomonas stutzeri).